A 133-amino-acid chain; its full sequence is Small ribosomal subunit protein uS11 (133 aa).

This sequence belongs to the universal ribosomal protein uS11 family. As to quaternary structure, part of the 30S ribosomal subunit. Interacts with proteins S7 and S18. Binds to IF-3.

In terms of biological role, located on the platform of the 30S subunit, it bridges several disparate RNA helices of the 16S rRNA. Forms part of the Shine-Dalgarno cleft in the 70S ribosome. The chain is Small ribosomal subunit protein uS11 from Brevibacillus brevis (strain 47 / JCM 6285 / NBRC 100599).